Consider the following 632-residue polypeptide: Golgin subfamily A member 8H (632 aa).

The interval 1 to 77 is disordered; sequence MAEETQHNKL…SSATLKDLES (77 aa). Coiled-coil stretches lie at residues 110-201 and 240-468; these read VEHQ…LSSR and ECAE…EKAD. Basic and acidic residues-rich tracts occupy residues 352–362 and 427–440; these read KQEERIQEQHK and HGGE…EEAP. 3 disordered regions span residues 352 to 379, 423 to 452, and 496 to 524; these read KQEE…EPNN, PGEG…DPES, and LSEP…DEGE. Residues 508 to 520 show a composition bias toward gly residues; that stretch reads LGGGHHQAGAQGG.

The protein belongs to the GOLGA8 family.

This Homo sapiens (Human) protein is Golgin subfamily A member 8H (GOLGA8H).